Consider the following 430-residue polypeptide: Asparagine--tRNA ligase (430 aa).

The protein belongs to the class-II aminoacyl-tRNA synthetase family. In terms of assembly, homodimer.

Its subcellular location is the cytoplasm. It catalyses the reaction tRNA(Asn) + L-asparagine + ATP = L-asparaginyl-tRNA(Asn) + AMP + diphosphate + H(+). The chain is Asparagine--tRNA ligase from Staphylococcus aureus (strain MRSA252).